A 244-amino-acid chain; its full sequence is Protein A47 (244 aa).

Belongs to the orthopoxvirus A47 protein family.

The protein is Protein A47 of Homo sapiens (Human).